A 310-amino-acid polypeptide reads, in one-letter code: Protein YIP5 (310 aa).

The interval 1–84 is disordered; it reads MPSNNSSFLD…VIGQNDNDGL (84 aa). Over residues 10-22 the composition is skewed to acidic residues; the sequence is DIDDDLEGVDDFG. Polar residues predominate over residues 35–57; sequence DSPNMNNSTAGKGSEFYNTTGSK. At S60 the chain carries Phosphoserine. The next 5 helical transmembrane spans lie at 131–151, 181–201, 220–240, 249–269, and 290–310; these read TDLY…FTMS, LHSI…TMQV, LISV…ILNI, TVQA…SYFL, and SIIV…FIIF.

Belongs to the YIP1 family. Interacts with SNX3, TVP18, TVP23, YIP1 and YIP4. Interacts with SEC4; The C-terminal cysteines in the Rab GTPase SEC4 are essential for the interaction. Interacts with YPT1, YPT6, YPT7, YPT10, YPT11, YPT31, YPT32 and YPT52; These proteins are all Rab GTPases.

The protein localises to the membrane. Its function is as follows. Possible role in vesicle-mediated transport. May be involved in proper membrane localization of Rab GTPases. In Saccharomyces cerevisiae (strain ATCC 204508 / S288c) (Baker's yeast), this protein is Protein YIP5 (YIP5).